The following is a 197-amino-acid chain: dTTP/UTP pyrophosphatase (197 aa).

Aspartate 70 acts as the Proton acceptor in catalysis.

It belongs to the Maf family. YhdE subfamily. The cofactor is a divalent metal cation.

It is found in the cytoplasm. It catalyses the reaction dTTP + H2O = dTMP + diphosphate + H(+). It carries out the reaction UTP + H2O = UMP + diphosphate + H(+). Functionally, nucleoside triphosphate pyrophosphatase that hydrolyzes dTTP and UTP. May have a dual role in cell division arrest and in preventing the incorporation of modified nucleotides into cellular nucleic acids. The polypeptide is dTTP/UTP pyrophosphatase (Methanosarcina mazei (strain ATCC BAA-159 / DSM 3647 / Goe1 / Go1 / JCM 11833 / OCM 88) (Methanosarcina frisia)).